A 265-amino-acid polypeptide reads, in one-letter code: Acyl-[acyl-carrier-protein]--UDP-N-acetylglucosamine O-acyltransferase (265 aa).

The protein belongs to the transferase hexapeptide repeat family. LpxA subfamily. In terms of assembly, homotrimer.

Its subcellular location is the cytoplasm. The enzyme catalyses a (3R)-hydroxyacyl-[ACP] + UDP-N-acetyl-alpha-D-glucosamine = a UDP-3-O-[(3R)-3-hydroxyacyl]-N-acetyl-alpha-D-glucosamine + holo-[ACP]. It functions in the pathway glycolipid biosynthesis; lipid IV(A) biosynthesis; lipid IV(A) from (3R)-3-hydroxytetradecanoyl-[acyl-carrier-protein] and UDP-N-acetyl-alpha-D-glucosamine: step 1/6. Functionally, involved in the biosynthesis of lipid A, a phosphorylated glycolipid that anchors the lipopolysaccharide to the outer membrane of the cell. This is Acyl-[acyl-carrier-protein]--UDP-N-acetylglucosamine O-acyltransferase from Polynucleobacter asymbioticus (strain DSM 18221 / CIP 109841 / QLW-P1DMWA-1) (Polynucleobacter necessarius subsp. asymbioticus).